Reading from the N-terminus, the 416-residue chain is 3-phosphoshikimate 1-carboxyvinyltransferase (416 aa).

3-phosphoshikimate is bound by residues Lys20, Ser21, and Arg25. Residue Lys20 coordinates phosphoenolpyruvate. Phosphoenolpyruvate contacts are provided by Gly88 and Arg116. Residues Ser159, Ser160, Gln161, Ser186, Asp300, and Lys327 each contribute to the 3-phosphoshikimate site. Gln161 is a phosphoenolpyruvate binding site. The active-site Proton acceptor is Asp300. Positions 331 and 373 each coordinate phosphoenolpyruvate.

This sequence belongs to the EPSP synthase family. In terms of assembly, monomer.

Its subcellular location is the cytoplasm. It carries out the reaction 3-phosphoshikimate + phosphoenolpyruvate = 5-O-(1-carboxyvinyl)-3-phosphoshikimate + phosphate. It functions in the pathway metabolic intermediate biosynthesis; chorismate biosynthesis. In terms of biological role, catalyzes the transfer of the enolpyruvyl moiety of phosphoenolpyruvate (PEP) to the 5-hydroxyl of shikimate-3-phosphate (S3P) to produce enolpyruvyl shikimate-3-phosphate and inorganic phosphate. The polypeptide is 3-phosphoshikimate 1-carboxyvinyltransferase (Archaeoglobus fulgidus (strain ATCC 49558 / DSM 4304 / JCM 9628 / NBRC 100126 / VC-16)).